A 132-amino-acid chain; its full sequence is Small ribosomal subunit protein uS11 (132 aa).

Belongs to the universal ribosomal protein uS11 family. In terms of assembly, part of the 30S ribosomal subunit. Interacts with proteins S7 and S18. Binds to IF-3.

Its function is as follows. Located on the platform of the 30S subunit, it bridges several disparate RNA helices of the 16S rRNA. Forms part of the Shine-Dalgarno cleft in the 70S ribosome. This chain is Small ribosomal subunit protein uS11, found in Oenococcus oeni (strain ATCC BAA-331 / PSU-1).